Here is a 313-residue protein sequence, read N- to C-terminus: 1-phosphofructokinase (313 aa).

Residues 222 to 227 (SMGAKG) and 254 to 255 (GD) contribute to the ATP site. D255 acts as the Proton acceptor in catalysis.

The protein belongs to the carbohydrate kinase PfkB family.

The catalysed reaction is beta-D-fructose 1-phosphate + ATP = beta-D-fructose 1,6-bisphosphate + ADP + H(+). Its function is as follows. Catalyzes the ATP-dependent phosphorylation of fructose-l-phosphate to fructose-l,6-bisphosphate. This is 1-phosphofructokinase (fruK) from Haemophilus influenzae (strain ATCC 51907 / DSM 11121 / KW20 / Rd).